The chain runs to 157 residues: DNA gyrase inhibitor (157 aa).

It belongs to the DNA gyrase inhibitor family. As to quaternary structure, interacts with DNA gyrase.

It is found in the cytoplasm. Its function is as follows. Inhibits the supercoiling activity of DNA gyrase. Acts by inhibiting DNA gyrase at an early step, prior to (or at the step of) binding of DNA by the gyrase. It protects cells against toxins that target DNA gyrase, by inhibiting activity of these toxins and reducing the formation of lethal double-strand breaks in the cell. This chain is DNA gyrase inhibitor, found in Citrobacter rodentium (strain ICC168) (Citrobacter freundii biotype 4280).